A 428-amino-acid chain; its full sequence is Glutamate-1-semialdehyde 2,1-aminomutase (428 aa).

K265 is modified (N6-(pyridoxal phosphate)lysine).

The protein belongs to the class-III pyridoxal-phosphate-dependent aminotransferase family. HemL subfamily. As to quaternary structure, homodimer. The cofactor is pyridoxal 5'-phosphate.

It is found in the cytoplasm. The enzyme catalyses (S)-4-amino-5-oxopentanoate = 5-aminolevulinate. The protein operates within porphyrin-containing compound metabolism; protoporphyrin-IX biosynthesis; 5-aminolevulinate from L-glutamyl-tRNA(Glu): step 2/2. The chain is Glutamate-1-semialdehyde 2,1-aminomutase from Methylobacillus flagellatus (strain ATCC 51484 / DSM 6875 / VKM B-1610 / KT).